A 201-amino-acid polypeptide reads, in one-letter code: Recombination protein RecR (201 aa).

The C4-type zinc finger occupies 60–75; the sequence is CSCCGNVDTIDPCTVC. The 96-residue stretch at 83–178 folds into the Toprim domain; it reads SVIIVVEDVA…KITRLAHGVP (96 aa).

This sequence belongs to the RecR family.

Its function is as follows. May play a role in DNA repair. It seems to be involved in an RecBC-independent recombinational process of DNA repair. It may act with RecF and RecO. In Sinorhizobium fredii (strain NBRC 101917 / NGR234), this protein is Recombination protein RecR.